Consider the following 151-residue polypeptide: 3-hydroxyacyl-[acyl-carrier-protein] dehydratase FabZ (151 aa).

His57 is an active-site residue.

It belongs to the thioester dehydratase family. FabZ subfamily.

It is found in the cytoplasm. It carries out the reaction a (3R)-hydroxyacyl-[ACP] = a (2E)-enoyl-[ACP] + H2O. Functionally, involved in unsaturated fatty acids biosynthesis. Catalyzes the dehydration of short chain beta-hydroxyacyl-ACPs and long chain saturated and unsaturated beta-hydroxyacyl-ACPs. In Synechococcus sp. (strain CC9605), this protein is 3-hydroxyacyl-[acyl-carrier-protein] dehydratase FabZ.